The primary structure comprises 181 residues: Bifunctional protein PyrR (181 aa).

Residues 39–40, 104–112, Arg-137, and Val-161 each bind substrate; these read RR and DDVLYTGRT. Residues 100–112 carry the PRPP-binding motif; sequence VILVDDVLYTGRT.

It belongs to the purine/pyrimidine phosphoribosyltransferase family. PyrR subfamily.

The catalysed reaction is UMP + diphosphate = 5-phospho-alpha-D-ribose 1-diphosphate + uracil. Its function is as follows. Regulates the transcription of the pyrimidine nucleotide (pyr) operon in response to exogenous pyrimidines. Also displays a weak uracil phosphoribosyltransferase activity which is not physiologically significant. The polypeptide is Bifunctional protein PyrR (Pasteurella multocida (strain Pm70)).